A 348-amino-acid polypeptide reads, in one-letter code: Rhodopsin (348 aa).

The Extracellular segment spans residues 1–33; sequence TEGPYFYIPMVNTTGIVRSPYEYPQYYLVNPAA. N12 carries N-linked (GlcNAc...) asparagine glycosylation. Residues 34–58 form a helical membrane-spanning segment; the sequence is YAMLGAYMFFLIIVGFPVNFMTLYV. Residues 59–70 are Cytoplasmic-facing; it reads TLEHKKLRTPLN. The chain crosses the membrane as a helical span at residues 71–93; it reads YILLNLAVADLFMVIGGFTTTIY. Topologically, residues 94-107 are extracellular; it reads TSMHGYFVLGRLGC. The cysteines at positions 107 and 184 are disulfide-linked. A helical membrane pass occupies residues 108-130; sequence NIEGFFATLGGMISLWSLAVLAI. The short motif at 131-133 is the 'Ionic lock' involved in activated form stabilization element; that stretch reads ERW. Residues 131-149 are Cytoplasmic-facing; it reads ERWVVVCKPISNFRFGENH. The helical transmembrane segment at 150-170 threads the bilayer; it reads AIMGVSLTWAMALACTVPPLV. Topologically, residues 171-199 are extracellular; sequence GWSRYIPEGMQCSCGIDYYTRAEGFNNES. Residue N197 is glycosylated (N-linked (GlcNAc...) asparagine). A helical transmembrane segment spans residues 200 to 221; the sequence is FVLYMFFCHFTIPLTIIFFCYG. Topologically, residues 222-249 are cytoplasmic; that stretch reads RLLCAVKEAAAAQQESETTQRAEREVTR. The helical transmembrane segment at 250-271 threads the bilayer; sequence MVIIMVIGFLICWLPYASVAWF. At 272-283 the chain is on the extracellular side; sequence IFTHQGSEFGPL. A helical membrane pass occupies residues 284–305; the sequence is FMTIPAFFAKSSSIYNPMIYIC. Residue K293 is modified to N6-(retinylidene)lysine. The Cytoplasmic segment spans residues 306 to 348; it reads MNKQFRHCMITTLFCGKNPFEGEEEGASSTKTEASSASSVSPA. Residue C320 is the site of S-palmitoyl cysteine attachment. The segment at 327 to 348 is disordered; it reads GEEEGASSTKTEASSASSVSPA. Residues 332-348 show a composition bias toward low complexity; the sequence is ASSTKTEASSASSVSPA.

Belongs to the G-protein coupled receptor 1 family. Opsin subfamily. Post-translationally, phosphorylated on some or all of the serine and threonine residues present in the C-terminal region. In terms of processing, contains one covalently linked retinal chromophore.

The protein resides in the membrane. It is found in the cell projection. It localises to the cilium. Its subcellular location is the photoreceptor outer segment. Photoreceptor required for image-forming vision at low light intensity. While most salt water fish species use retinal as chromophore, most freshwater fish use 3-dehydroretinal, or a mixture of retinal and 3-dehydroretinal. Light-induced isomerization of 11-cis to all-trans retinal triggers a conformational change that activates signaling via G-proteins. Subsequent receptor phosphorylation mediates displacement of the bound G-protein alpha subunit by arrestin and terminates signaling. In Sargocentron microstoma (Smallmouth squirrelfish), this protein is Rhodopsin (rho).